The primary structure comprises 468 residues: Na(+)/H(+) antiporter NhaA 2 (468 aa).

Helical transmembrane passes span 31–51, 82–102, 118–138, 147–167, 176–196, 199–219, 226–246, 321–341, 353–373, 393–413, and 422–442; these read FLHV…VALA, LHFW…GLEI, VLPV…YLAL, GWGV…ALLG, VLLL…IAVF, SSIS…VLAL, SPVV…SAGV, PWVA…VSLG, LLLG…MVAC, VLVV…VAGL, and GVAK…AMAV.

The protein belongs to the NhaA Na(+)/H(+) (TC 2.A.33) antiporter family.

The protein localises to the cell inner membrane. It catalyses the reaction Na(+)(in) + 2 H(+)(out) = Na(+)(out) + 2 H(+)(in). In terms of biological role, na(+)/H(+) antiporter that extrudes sodium in exchange for external protons. The chain is Na(+)/H(+) antiporter NhaA 2 from Sorangium cellulosum (strain So ce56) (Polyangium cellulosum (strain So ce56)).